We begin with the raw amino-acid sequence, 254 residues long: Imidazole glycerol phosphate synthase subunit HisF (254 aa).

Residues Asp-14 and Asp-133 contribute to the active site.

It belongs to the HisA/HisF family. As to quaternary structure, heterodimer of HisH and HisF.

The protein resides in the cytoplasm. It carries out the reaction 5-[(5-phospho-1-deoxy-D-ribulos-1-ylimino)methylamino]-1-(5-phospho-beta-D-ribosyl)imidazole-4-carboxamide + L-glutamine = D-erythro-1-(imidazol-4-yl)glycerol 3-phosphate + 5-amino-1-(5-phospho-beta-D-ribosyl)imidazole-4-carboxamide + L-glutamate + H(+). The protein operates within amino-acid biosynthesis; L-histidine biosynthesis; L-histidine from 5-phospho-alpha-D-ribose 1-diphosphate: step 5/9. In terms of biological role, IGPS catalyzes the conversion of PRFAR and glutamine to IGP, AICAR and glutamate. The HisF subunit catalyzes the cyclization activity that produces IGP and AICAR from PRFAR using the ammonia provided by the HisH subunit. In Nitratiruptor sp. (strain SB155-2), this protein is Imidazole glycerol phosphate synthase subunit HisF.